The sequence spans 276 residues: Putative E3 ubiquitin-protein ligase SINA-like 9 (276 aa).

The RING-type zinc-finger motif lies at 38–74 (CPICCEALTSPIFQCDNGHLACGSCCPKLSNKCPACT). Residues 88-274 (VLESILIPCP…MQVFIIENVD (187 aa)) form an SBD region. An SIAH-type zinc finger spans residues 91 to 149 (SILIPCPNVRFGCTKSFFYGKESAHEKECIFSQCSCPSSVCDYTGSYKDLYAHYKLTHS). Positions 96, 103, 115, 119, 126, 131, 143, and 148 each coordinate Zn(2+).

It belongs to the SINA (Seven in absentia) family.

It catalyses the reaction S-ubiquitinyl-[E2 ubiquitin-conjugating enzyme]-L-cysteine + [acceptor protein]-L-lysine = [E2 ubiquitin-conjugating enzyme]-L-cysteine + N(6)-ubiquitinyl-[acceptor protein]-L-lysine.. The protein operates within protein modification; protein ubiquitination. In terms of biological role, E3 ubiquitin-protein ligase that mediates ubiquitination and subsequent proteasomal degradation of target proteins. E3 ubiquitin ligases accept ubiquitin from an E2 ubiquitin-conjugating enzyme in the form of a thioester and then directly transfers the ubiquitin to targeted substrates. It probably triggers the ubiquitin-mediated degradation of different substrates. In Arabidopsis thaliana (Mouse-ear cress), this protein is Putative E3 ubiquitin-protein ligase SINA-like 9.